The chain runs to 305 residues: Mitochondrial uncoupling protein 2 (305 aa).

Solcar repeat units follow at residues isoleucine 10–leucine 104, isoleucine 114–threonine 205, and aspartate 214–valine 297. 6 helical membrane-spanning segments follow: residues phenylalanine 16–alanine 36, isoleucine 73–leucine 93, isoleucine 120–valine 140, threonine 179–tyrosine 199, leucine 220–valine 240, and tyrosine 270–threonine 290.

Belongs to the mitochondrial carrier (TC 2.A.29) family.

The protein localises to the mitochondrion inner membrane. Functionally, PUMPS are mitochondrial transporter proteins that create proton leaks across the inner mitochondrial membrane, thus uncoupling oxidative phosphorylation. This leads to a decrease in the efficiency of oxidative phosphorylation and an increase in heat production. May be involved in protecting plant cells against oxidative stress damage. The polypeptide is Mitochondrial uncoupling protein 2 (PUMP2) (Arabidopsis thaliana (Mouse-ear cress)).